Here is a 795-residue protein sequence, read N- to C-terminus: TBC1 domain family member 5 (795 aa).

Over residues 1–13 the composition is skewed to basic and acidic residues; the sequence is MYHSLSETRHPLQ. The interval 1-49 is disordered; that stretch reads MYHSLSETRHPLQPEEQEVGIDPLSSYSNKSGGDSNKNGRRTSSTLDSE. The segment covering 25–49 has biased composition (polar residues); sequence SSYSNKSGGDSNKNGRRTSSTLDSE. Thr-42 is modified (phosphothreonine). Phosphoserine is present on residues Ser-43 and Ser-44. Positions 56-64 are required for interaction with retromer; involved in interaction with ATG8 family proteins; the sequence is RKEWEELFV. The LIR 1 signature appears at 57–62; that stretch reads KEWEEL. In terms of domain architecture, Rab-GAP TBC spans 81–359; that stretch reads LRSSRFRSIC…VVWDALFADG (279 aa). Position 460 is a phosphoserine (Ser-460). A disordered region spans residues 475-564; it reads PGSAGGPVPG…PPSSATKKDS (90 aa). Residues 484–496 show a composition bias toward low complexity; the sequence is GGNSSSSSSVVIP. Ser-522, Ser-539, Ser-541, Ser-544, Ser-554, Ser-570, Ser-584, and Ser-730 each carry phosphoserine. Residues 523-542 show a composition bias toward polar residues; sequence MPVQLNKGLSSKNISSSPSV. A compositionally biased stretch (polar residues) spans 554-564; sequence SPPSSATKKDS. The disordered stretch occupies residues 674-795; sequence HYCSSGQGQG…GFTIVSPLDI (122 aa). Positions 727–748 are enriched in polar residues; sequence ARGSFSGQAQPLRTLRSTSGKS. Over residues 765–776 the composition is skewed to low complexity; that stretch reads PASASSSNPSSS. Positions 785–789 match the LIR 2 motif; that stretch reads SGFTI. The interval 786–791 is required for interaction with ATG8 family proteins; it reads GFTIVS. Position 791 is a phosphoserine (Ser-791).

In terms of assembly, interacts with MAP1LC3A, MAP1LC3B, MAP1LC3C, GABARAP, GABARAPL1, GABARAPL2. Interacts with VPS29 and VPS35; indicative for an association with retromer CSC subcomplex. MAP1LC3A and VPS29 compete for binding to TBC1D5. Interacts with AP2M1; indicative for an association with the AP2 complex. Interacts with ULK1 and ATG13 (phosphorylated); indicative for an association with the activated ULK1-ATG13-FIP200 complex. Interacts with ATG9A; the interactions seems to be restricted to the AP2-clathrin-associated fraction of ATG9A.

The protein resides in the endosome membrane. Its subcellular location is the cytoplasmic vesicle. It localises to the autophagosome. Functionally, may act as a GTPase-activating protein (GAP) for Rab family protein(s). May act as a GAP for RAB7A. Can displace RAB7A and retromer CSC subcomplex from the endosomal membrane to the cytosol; at least retromer displacement seems to require its catalytic activity. Required for retrograde transport of cargo proteins from endosomes to the trans-Golgi network (TGN); the function seems to require its catalytic activity. Involved in regulation of autophagy. May act as a molecular switch between endosomal and autophagosomal transport and is involved in reprogramming vesicle trafficking upon autophagy induction. Involved in the trafficking of ATG9A upon activation of autophagy. May regulate the recruitment of ATG9A-AP2-containing vesicles to autophagic membranes. This is TBC1 domain family member 5 (TBC1D5) from Homo sapiens (Human).